We begin with the raw amino-acid sequence, 308 residues long: Elongation factor Ts (308 aa).

The interval 80–83 is involved in Mg(2+) ion dislocation from EF-Tu; sequence TDFV.

Belongs to the EF-Ts family.

It is found in the cytoplasm. In terms of biological role, associates with the EF-Tu.GDP complex and induces the exchange of GDP to GTP. It remains bound to the aminoacyl-tRNA.EF-Tu.GTP complex up to the GTP hydrolysis stage on the ribosome. The protein is Elongation factor Ts of Rhizobium etli (strain CIAT 652).